Consider the following 256-residue polypeptide: MRILLTNDDGIHAEGLSVLERIALTISDDVWVVAPEVDQSGLAHSLTLSEPLRLRQVSERHFALRGTPTDCVIMAARKILDRKPDLVLSGVNIGANLADDVTYSGTVAGAIEGTLQGIRSIAVSQAYHHAVGGAVSWDVAETHAPALIRTLMNVELPDGTLLNVNFPNCAADAVAGVEVTSQGKLEFGLSIDERIDGRGYPYFWLRFGERYGDFRSGTDIHAVRENRISVTPLKLDLTDYTVQERIARALREGTGA.

Residues Asp-8, Asp-9, Ser-40, and Asn-92 each contribute to the a divalent metal cation site.

Belongs to the SurE nucleotidase family. It depends on a divalent metal cation as a cofactor.

The protein resides in the cytoplasm. The catalysed reaction is a ribonucleoside 5'-phosphate + H2O = a ribonucleoside + phosphate. In terms of biological role, nucleotidase that shows phosphatase activity on nucleoside 5'-monophosphates. The polypeptide is 5'-nucleotidase SurE (Sinorhizobium fredii (strain NBRC 101917 / NGR234)).